Consider the following 576-residue polypeptide: Peroxisomal targeting signal receptor (576 aa).

A Glycyl cysteine thioester (Cys-Gly) (interchain with G-Cter in ubiquitin) cross-link involves residue Cys10. The segment at 11–33 (AAGSNPLAQFTKHTQHDTSLQQS) is amphipathic helix 1 (AH1). Residue Lys22 forms a Glycyl lysine isopeptide (Lys-Gly) (interchain with G-Cter in ubiquitin) linkage. Residues 58–75 (RQQMDQFMQQQNNPAFNF) are amphipathic helix 2 (AH2). Short sequence motifs (wxxxF/Y motif) lie at residues 100-104 (WNQEF) and 128-132 (WAQDF). Positions 176–195 (AQMQQQNPAQAQTSEQSQTQ) are disordered. The short motif at 196 to 200 (WEDQF) is the WxxxF/Y motif 3 element. An amphipathic helix 4 (AH4) region spans residues 224–240 (FEQVWDDIQVSYADVEL). Positions 249-253 (WEKDF) match the WxxxF/Y motif 4 motif. TPR repeat units lie at residues 278–311 (PDAYEIGMRLMESGAKLSEAGLAFEAAVQQDPKH), 312–345 (VDAWLKLGEVQTQNEKESDGIAALEKCLELDPTN), 346–383 (LAALMTLAISYINDGYDNAAYATLERWIETKYPDIASR), 384–421 (ARSSNPDLDGGDRIEQNKRVTELFMKAAQLSPDVASMD), 422–455 (ADVQTGLGVLFYSMEEFDKTIDCFKAAIEVEPDK), 456–489 (ALNWNRLGAALANYNKPEEAVEAYSRALQLNPNF), and 490–523 (VRARYNLGVSFINMGRYKEAVEHLLTGISLHEVE).

Belongs to the peroxisomal targeting signal receptor family. Interacts (via WxxxF/Y and LVxEF motifs) with PEX14; promoting translocation through the PEX13-PEX14 docking complex. Interacts with PEX8. In terms of processing, a disulfide bond is created between Cys-10 and Cys-338 or Cys-444. Monoubiquitinated at Cys-10 by PEX2 during PEX5 passage through the retrotranslocation channel: monoubiquitination acts as a signal for PEX5 extraction and is required for proper export from peroxisomes and recycling. When PEX5 recycling is compromised, polyubiquitinated at Lys-22 by PEX10 during its passage through the retrotranslocation channel, leading to its degradation.

It is found in the peroxisome membrane. It localises to the cytoplasm. The protein resides in the cytosol. Its subcellular location is the peroxisome matrix. Receptor that mediates peroxisomal import of proteins containing a C-terminal PTS1-type tripeptide peroxisomal targeting signal (SKL-type). Binds to cargo proteins containing a PTS1 peroxisomal targeting signal in the cytosol, and translocates them into the peroxisome matrix by passing through the peroxisomal docking complex along with cargo proteins. PEX5 receptor is then retrotranslocated into the cytosol, leading to release of bound cargo in the peroxisome matrix, and reset for a subsequent peroxisome import cycle. Required for PEX7 ubiquitination. This Komagataella phaffii (strain GS115 / ATCC 20864) (Yeast) protein is Peroxisomal targeting signal receptor.